Reading from the N-terminus, the 207-residue chain is FMN-dependent NADH:quinone oxidoreductase 2 (207 aa).

FMN-binding positions include Ser9, 15–17, and 97–100; these read SAS and MWNF.

It belongs to the azoreductase type 1 family. Homodimer. FMN is required as a cofactor.

The catalysed reaction is 2 a quinone + NADH + H(+) = 2 a 1,4-benzosemiquinone + NAD(+). It carries out the reaction N,N-dimethyl-1,4-phenylenediamine + anthranilate + 2 NAD(+) = 2-(4-dimethylaminophenyl)diazenylbenzoate + 2 NADH + 2 H(+). Functionally, quinone reductase that provides resistance to thiol-specific stress caused by electrophilic quinones. Also exhibits azoreductase activity. Catalyzes the reductive cleavage of the azo bond in aromatic azo compounds to the corresponding amines. The protein is FMN-dependent NADH:quinone oxidoreductase 2 of Burkholderia lata (strain ATCC 17760 / DSM 23089 / LMG 22485 / NCIMB 9086 / R18194 / 383).